The following is a 396-amino-acid chain: NADH-quinone oxidoreductase subunit D (396 aa).

Belongs to the complex I 49 kDa subunit family. NDH-1 is composed of 14 different subunits. Subunits NuoB, C, D, E, F, and G constitute the peripheral sector of the complex.

It localises to the cell inner membrane. It catalyses the reaction a quinone + NADH + 5 H(+)(in) = a quinol + NAD(+) + 4 H(+)(out). Its function is as follows. NDH-1 shuttles electrons from NADH, via FMN and iron-sulfur (Fe-S) centers, to quinones in the respiratory chain. The immediate electron acceptor for the enzyme in this species is believed to be ubiquinone. Couples the redox reaction to proton translocation (for every two electrons transferred, four hydrogen ions are translocated across the cytoplasmic membrane), and thus conserves the redox energy in a proton gradient. In Rhizobium johnstonii (strain DSM 114642 / LMG 32736 / 3841) (Rhizobium leguminosarum bv. viciae), this protein is NADH-quinone oxidoreductase subunit D.